Here is a 157-residue protein sequence, read N- to C-terminus: Succinate dehydrogenase assembly factor 2-B, mitochondrial (157 aa).

The transit peptide at 1–22 directs the protein to the mitochondrion; the sequence is MLSQWFRGRHLVVRSALFSRRR.

It belongs to the SDHAF2 family. Interacts with the flavoprotein subunit within the SDH catalytic dimer.

The protein localises to the mitochondrion matrix. In terms of biological role, plays an essential role in the assembly of succinate dehydrogenase (SDH), an enzyme complex (also referred to as respiratory complex II) that is a component of both the tricarboxylic acid (TCA) cycle and the mitochondrial electron transport chain, and which couples the oxidation of succinate to fumarate with the reduction of ubiquinone (coenzyme Q) to ubiquinol. Required for flavinylation (covalent attachment of FAD) of the flavoprotein subunit of the SDH catalytic dimer. The chain is Succinate dehydrogenase assembly factor 2-B, mitochondrial from Drosophila mojavensis (Fruit fly).